Here is a 200-residue protein sequence, read N- to C-terminus: Inducible T-cell costimulator (200 aa).

A signal peptide spans 1–20 (MKPYFCRVFVFCFLIRLLTG). Over 21–144 (EINGSADHRM…QLCCQLKLWL (124 aa)) the chain is Extracellular. Asn-23 carries N-linked (GlcNAc...) asparagine glycosylation. Residues 30 to 133 (MFSFHNGGVQ…LSGGYLHIYE (104 aa)) form the Ig-like V-type domain. Intrachain disulfides connect Cys-42–Cys-109 and Cys-63–Cys-83. N-linked (GlcNAc...) asparagine glycosylation is found at Asn-89 and Asn-123. A helical membrane pass occupies residues 145–165 (PVGCAAFVVVLLFGCILIIWF). Over 166–200 (SKKKYGSSVHDPNSEYMFMAAVNTNKKSRLAGVTS) the chain is Cytoplasmic.

As to quaternary structure, homodimer; disulfide-linked. Interacts with ICOSLG. Interacts with PIK3R1. Interacts with TBK1; this interaction is critical for the maturation of T follicular regulatory cells. In terms of processing, N-glycosylated. Expressed on activated T-cells and resting memory T-cells. High expression seen in the thymic medulla and in the germinal centers and T-cell zones of lymph nodes and Peyer patches. Expressed at low levels in the spleen.

The protein resides in the cell membrane. In terms of biological role, stimulatory receptor expressed in activated or antigen-experienced T-cells that plays an important role in the immune response. Upon binding to its ligand ICOSL expressed on antigen presenting cells (APCs), delivers costimulatory signals that enhances all basic T-cell responses to a foreign antigen, namely proliferation, secretion of lymphokines including IL10, up-regulation of molecules that mediate cell-cell interaction, and effective help for antibody secretion by B-cells. Also acts as a costimulatory receptor critical for the differentiation of T follicular regulatory cells upon immune challenges such as viral infection. Mechanistically, potentiates TCR-induced calcium flux by augmenting PLCG1 activation and actin remodeling. In addition, activates PI3K signaling pathways independently of calcium flux. Essential both for efficient interaction between T and B-cells and for normal antibody responses to T-cell dependent antigens. Prevents the apoptosis of pre-activated T-cells. Plays a critical role in CD40-mediated class switching of immunoglobin isotypes. The protein is Inducible T-cell costimulator (Icos) of Mus musculus (Mouse).